A 303-amino-acid chain; its full sequence is DnaJ homolog subfamily C member 17 (303 aa).

A J domain is found at 11–76 (DLYALLGIEE…AARAAYDKVR (66 aa)). 2 disordered regions span residues 104–123 (ERQAQAHGSEEEEESRSATT) and 150–170 (IRQDREQRLRGRTENTEGKGT). A Phosphoserine modification is found at S112. Positions 150–166 (IRQDREQRLRGRTENTE) are enriched in basic and acidic residues. In terms of domain architecture, RRM spans 178 to 249 (KCKKEDESQG…NPLKVSWLEG (72 aa)). K264 is subject to N6-methyllysine.

Expressed in the thyroid gland.

The protein localises to the cytoplasm. Its subcellular location is the nucleus. Functionally, may negatively affect PAX8-induced thyroglobulin/TG transcription. This Mus musculus (Mouse) protein is DnaJ homolog subfamily C member 17 (Dnajc17).